The sequence spans 483 residues: Betaine aldehyde dehydrogenase (483 aa).

2 residues coordinate K(+): I27 and D93. 149–151 (GAW) contributes to the NAD(+) binding site. K161 acts as the Charge relay system in catalysis. 175 to 178 (KPSE) is a binding site for NAD(+). Residue V179 participates in K(+) binding. 228–231 (SVPT) serves as a coordination point for NAD(+). V243 is a K(+) binding site. The active-site Proton acceptor is the E249. NAD(+) contacts are provided by G251, C283, and E380. Residue C283 is the Nucleophile of the active site. A Cysteine sulfenic acid (-SOH) modification is found at C283. K(+) contacts are provided by K450 and G453. The active-site Charge relay system is the E457.

It belongs to the aldehyde dehydrogenase family. Dimer of dimers. It depends on K(+) as a cofactor.

The catalysed reaction is betaine aldehyde + NAD(+) + H2O = glycine betaine + NADH + 2 H(+). The protein operates within amine and polyamine biosynthesis; betaine biosynthesis via choline pathway; betaine from betaine aldehyde: step 1/1. Functionally, involved in the biosynthesis of the osmoprotectant glycine betaine. Catalyzes the irreversible oxidation of betaine aldehyde to the corresponding acid. The chain is Betaine aldehyde dehydrogenase from Cereibacter sphaeroides (strain KD131 / KCTC 12085) (Rhodobacter sphaeroides).